The sequence spans 183 residues: Adenine phosphoribosyltransferase (183 aa).

This sequence belongs to the purine/pyrimidine phosphoribosyltransferase family. In terms of assembly, homodimer.

The protein resides in the cytoplasm. It catalyses the reaction AMP + diphosphate = 5-phospho-alpha-D-ribose 1-diphosphate + adenine. It functions in the pathway purine metabolism; AMP biosynthesis via salvage pathway; AMP from adenine: step 1/1. Functionally, catalyzes a salvage reaction resulting in the formation of AMP, that is energically less costly than de novo synthesis. This chain is Adenine phosphoribosyltransferase, found in Proteus mirabilis (strain HI4320).